We begin with the raw amino-acid sequence, 2322 residues long: Protein sidekick homolog (2322 aa).

The first 26 residues, 1-26, serve as a signal peptide directing secretion; the sequence is MNYRIFLLFCTTTVLWSVVSTQLVLG. The Extracellular portion of the chain corresponds to 27–2020; sequence KPPIFQNTGP…IPDDPFYTTW (1994 aa). 3 Ig-like C2-type domains span residues 28–105, 217–319, and 324–397; these read PPIF…AAIS, PSLQ…AYLT, and PVLK…ADMS. Intrachain disulfides connect Cys-52–Cys-94, Cys-247–Cys-301, and Cys-345–Cys-386. Asn-408 carries an N-linked (GlcNAc...) asparagine glycan. Ig-like C2-type domains lie at 450–545 and 548–639; these read PFTS…VQVN and SLIE…AMLQ. 2 cysteine pairs are disulfide-bonded: Cys-481/Cys-529 and Cys-569/Cys-623. N-linked (GlcNAc...) asparagine glycosylation is found at Asn-633 and Asn-656. 13 consecutive Fibronectin type-III domains span residues 646-752, 757-854, 859-958, 962-1056, 1060-1155, 1160-1255, 1260-1360, 1364-1458, 1464-1567, 1572-1672, 1674-1774, 1777-1873, and 1908-2010; these read MPER…MPQQ, APRN…TAEG, APKN…TEED, AVDE…VPPE, RPSM…TLQT, PSQR…TYES, SPRN…TLED, PPES…SSVR, APAP…TLPS, QPIS…VGYS, PKRN…LEDK, PVGV…SKDG, and QAKR…VPES. The disordered stretch occupies residues 732–762; the sequence is SNKHGPGKPSLPSSSVTMPQQPPSAAPRNVA. N-linked (GlcNAc...) asparagine glycans are attached at residues Asn-808, Asn-869, Asn-933, and Asn-1017. A compositionally biased stretch (basic and acidic residues) spans 1040–1049; the sequence is GDGPVEETKF. The disordered stretch occupies residues 1040–1060; the sequence is GDGPVEETKFESGVPPELPGR. Asn-1108 is a glycosylation site (N-linked (GlcNAc...) asparagine). A disordered region spans residues 1139-1163; the sequence is GRGAPSEPSRTFETLQTNPETPSQR. Residues 1146-1163 are compositionally biased toward polar residues; it reads PSRTFETLQTNPETPSQR. N-linked (GlcNAc...) asparagine glycosylation is found at Asn-1615, Asn-1677, and Asn-1864. Positions 1916 to 1965 are disordered; that stretch reads EETENGYVSQRPRRNEIRGAKSAAQTSASSNSNRPTHPIGEWITLRPTDG. Positions 1935–1947 are enriched in low complexity; sequence AKSAAQTSASSNS. A helical membrane pass occupies residues 2021-2041; that stretch reads WFMALVAMAAFVLIVIIIAIL. Residues 2042–2322 are Cytoplasmic-facing; it reads CVTGSSAKYR…NLTAGFSSFV (281 aa). Disordered regions lie at residues 2081 to 2114, 2167 to 2254, and 2276 to 2322; these read NMTR…SVLG, YVVS…ADDI, and MVRA…SSFV. Positions 2092-2101 are enriched in polar residues; the sequence is PGTTQSWLSD. A compositionally biased stretch (low complexity) spans 2207–2223; sequence PSSSGGSQPQGSPQQQQ. Positions 2227 to 2238 are enriched in acidic residues; the sequence is DSFDEEDDVDDD. Polar residues-rich tracts occupy residues 2282 to 2302 and 2310 to 2322; these read LTNQ…STSE and ATPN…SSFV.

This sequence belongs to the sidekick family.

It is found in the membrane. In terms of biological role, cell adhesion protein. The protein is Protein sidekick homolog (rig-4) of Caenorhabditis briggsae.